A 106-amino-acid chain; its full sequence is UPF0145 protein CPE0882 (106 aa).

Belongs to the UPF0145 family.

This chain is UPF0145 protein CPE0882, found in Clostridium perfringens (strain 13 / Type A).